We begin with the raw amino-acid sequence, 365 residues long: Probable dual-specificity RNA methyltransferase RlmN (365 aa).

Catalysis depends on glutamate 99, which acts as the Proton acceptor. The Radical SAM core domain maps to 105-344 (QSYGLSVCVT…CVVRQEHGTD (240 aa)). Residues cysteine 112 and cysteine 349 are joined by a disulfide bond. 3 residues coordinate [4Fe-4S] cluster: cysteine 119, cysteine 123, and cysteine 126. S-adenosyl-L-methionine is bound by residues 171-172 (GE), serine 203, 227-229 (SLH), and asparagine 305. Cysteine 349 serves as the catalytic S-methylcysteine intermediate.

Belongs to the radical SAM superfamily. RlmN family. The cofactor is [4Fe-4S] cluster.

It localises to the cytoplasm. It catalyses the reaction adenosine(2503) in 23S rRNA + 2 reduced [2Fe-2S]-[ferredoxin] + 2 S-adenosyl-L-methionine = 2-methyladenosine(2503) in 23S rRNA + 5'-deoxyadenosine + L-methionine + 2 oxidized [2Fe-2S]-[ferredoxin] + S-adenosyl-L-homocysteine. It carries out the reaction adenosine(37) in tRNA + 2 reduced [2Fe-2S]-[ferredoxin] + 2 S-adenosyl-L-methionine = 2-methyladenosine(37) in tRNA + 5'-deoxyadenosine + L-methionine + 2 oxidized [2Fe-2S]-[ferredoxin] + S-adenosyl-L-homocysteine. Functionally, specifically methylates position 2 of adenine 2503 in 23S rRNA and position 2 of adenine 37 in tRNAs. The polypeptide is Probable dual-specificity RNA methyltransferase RlmN (Lactococcus lactis subsp. cremoris (strain MG1363)).